The following is a 450-amino-acid chain: tRNA-2-methylthio-N(6)-dimethylallyladenosine synthase (450 aa).

In terms of domain architecture, MTTase N-terminal spans Lys3 to Arg118. Residues Cys12, Cys49, Cys81, Cys155, Cys159, and Cys162 each coordinate [4Fe-4S] cluster. The region spanning Ser141–Ser376 is the Radical SAM core domain. The TRAM domain maps to Ala377 to Ala440.

It belongs to the methylthiotransferase family. MiaB subfamily. Monomer. It depends on [4Fe-4S] cluster as a cofactor.

It is found in the cytoplasm. The enzyme catalyses N(6)-dimethylallyladenosine(37) in tRNA + (sulfur carrier)-SH + AH2 + 2 S-adenosyl-L-methionine = 2-methylsulfanyl-N(6)-dimethylallyladenosine(37) in tRNA + (sulfur carrier)-H + 5'-deoxyadenosine + L-methionine + A + S-adenosyl-L-homocysteine + 2 H(+). Catalyzes the methylthiolation of N6-(dimethylallyl)adenosine (i(6)A), leading to the formation of 2-methylthio-N6-(dimethylallyl)adenosine (ms(2)i(6)A) at position 37 in tRNAs that read codons beginning with uridine. This Verminephrobacter eiseniae (strain EF01-2) protein is tRNA-2-methylthio-N(6)-dimethylallyladenosine synthase.